A 160-amino-acid polypeptide reads, in one-letter code: 6-hydroxypseudooxynicotine dehydrogenase complex subunit beta (160 aa).

A 2Fe-2S ferredoxin-type domain is found at 4-80 (FRLTVEVNGV…NSRIETVESL (77 aa)). Positions 42, 47, 50, 62, 101, 104, 137, and 139 each coordinate [2Fe-2S] cluster.

In terms of assembly, heterohexamer of 2 alpha (kdhA), 2 beta (kdhB) and 2 gamma (kdhC) subunit. Dimer of heterotrimers. Requires [2Fe-2S] cluster as cofactor.

The enzyme catalyses 6-hydroxypseudooxynicotine + A + H2O = 2,6-dihydroxypseudooxynicotine + AH2. Its pathway is alkaloid degradation; nicotine degradation. Its function is as follows. Molybdo-flavoprotein enzyme complex involved in nicotine degradation. The subunit gamma (large subunit) contains the substrate-binding sites, the subunit alpha (medium subunit) binds FAD and the subunit beta (small subunit) has a 2Fe-2S ferredoxin-type domain which binds 2 2Fe-2S clusters. The protein is 6-hydroxypseudooxynicotine dehydrogenase complex subunit beta (kdhB) of Paenarthrobacter nicotinovorans (Arthrobacter nicotinovorans).